A 489-amino-acid chain; its full sequence is NADH-quinone oxidoreductase subunit N (489 aa).

The next 14 helical transmembrane spans lie at 6 to 26, 37 to 57, 66 to 86, 105 to 125, 127 to 147, 159 to 179, 204 to 224, 239 to 259, 271 to 291, 299 to 319, 329 to 349, 377 to 397, 408 to 430, and 452 to 472; these read VLFI…AVML, VFYI…PASS, LLIV…GSLA, FYLL…AHHL, AIFI…GYAF, YMVL…LIYA, ITLL…KLSL, PAPV…AVLL, FFYS…NLLA, RLLG…LIAC, VALY…VVSL, SAMT…GFIG, FHLW…YYLR, and ALTT…LLGI.

Belongs to the complex I subunit 2 family. As to quaternary structure, NDH-1 is composed of 14 different subunits. Subunits NuoA, H, J, K, L, M, N constitute the membrane sector of the complex.

The protein localises to the cell inner membrane. It catalyses the reaction a quinone + NADH + 5 H(+)(in) = a quinol + NAD(+) + 4 H(+)(out). NDH-1 shuttles electrons from NADH, via FMN and iron-sulfur (Fe-S) centers, to quinones in the respiratory chain. The immediate electron acceptor for the enzyme in this species is believed to be ubiquinone. Couples the redox reaction to proton translocation (for every two electrons transferred, four hydrogen ions are translocated across the cytoplasmic membrane), and thus conserves the redox energy in a proton gradient. This is NADH-quinone oxidoreductase subunit N from Tolumonas auensis (strain DSM 9187 / NBRC 110442 / TA 4).